A 229-amino-acid chain; its full sequence is Large ribosomal subunit protein uL1 (229 aa).

Belongs to the universal ribosomal protein uL1 family. As to quaternary structure, part of the 50S ribosomal subunit.

Binds directly to 23S rRNA. The L1 stalk is quite mobile in the ribosome, and is involved in E site tRNA release. In terms of biological role, protein L1 is also a translational repressor protein, it controls the translation of the L11 operon by binding to its mRNA. The sequence is that of Large ribosomal subunit protein uL1 from Clostridium botulinum (strain Alaska E43 / Type E3).